The sequence spans 248 residues: Pulmonary surfactant-associated protein A (248 aa).

The N-terminal stretch at 1–20 is a signal peptide; it reads MLLCSLTLTLILLAVSGTKC. Residues 31-100 enclose the Collagen-like domain; sequence GVPGIPGSPG…PGERGPPGPP (70 aa). Positions 34-105 are disordered; that stretch reads GIPGSPGLPG…PPGPPAYPDE (72 aa). Residues 54–65 show a composition bias toward pro residues; that stretch reads PGPPGPIGPPGG. Basic and acidic residues predominate over residues 84-93; the sequence is ERGDKGEPGE. The C-type lectin domain maps to 134 to 247; that stretch reads VGEKVFSTNG…CLQYRLAICE (114 aa). Cystine bridges form between Cys155–Cys246 and Cys224–Cys238. An N-linked (GlcNAc...) asparagine glycan is attached at Asn207. Ca(2+)-binding residues include Glu215, Arg217, Asn234, and Asp235.

The protein belongs to the SFTPA family. In terms of assembly, oligomeric complex of 6 set of homotrimers.

It localises to the secreted. The protein localises to the extracellular space. It is found in the extracellular matrix. The protein resides in the surface film. Its function is as follows. In presence of calcium ions, it binds to surfactant phospholipids and contributes to lower the surface tension at the air-liquid interface in the alveoli of the mammalian lung and is essential for normal respiration. Enhances the expression of MYO18A/SP-R210 on alveolar macrophages. The chain is Pulmonary surfactant-associated protein A (SFTPA1) from Equus caballus (Horse).